A 72-amino-acid chain; its full sequence is Translation initiation factor IF-1 (72 aa).

One can recognise an S1-like domain in the interval 1–72; that stretch reads MSKEEVLEFS…TKGRIIYRYK (72 aa).

Belongs to the IF-1 family. In terms of assembly, component of the 30S ribosomal translation pre-initiation complex which assembles on the 30S ribosome in the order IF-2 and IF-3, IF-1 and N-formylmethionyl-tRNA(fMet); mRNA recruitment can occur at any time during PIC assembly.

The protein localises to the cytoplasm. One of the essential components for the initiation of protein synthesis. Stabilizes the binding of IF-2 and IF-3 on the 30S subunit to which N-formylmethionyl-tRNA(fMet) subsequently binds. Helps modulate mRNA selection, yielding the 30S pre-initiation complex (PIC). Upon addition of the 50S ribosomal subunit IF-1, IF-2 and IF-3 are released leaving the mature 70S translation initiation complex. The protein is Translation initiation factor IF-1 of Bartonella henselae (strain ATCC 49882 / DSM 28221 / CCUG 30454 / Houston 1) (Rochalimaea henselae).